A 163-amino-acid chain; its full sequence is Probable ribosome biogenesis protein RLP24 (163 aa).

Belongs to the eukaryotic ribosomal protein eL24 family. As to quaternary structure, associated with nucleolar and cytoplasmic pre-60S particles. At the end of biogenesis it dissociates from cytoplasmic pre-60S particles and is likely to be exchanged for its ribosomal homolog, RPL24.

It localises to the nucleus. Its subcellular location is the nucleolus. In terms of biological role, involved in the biogenesis of the 60S ribosomal subunit. Ensures the docking of GTPBP4/NOG1 to pre-60S particles. In Bos taurus (Bovine), this protein is Probable ribosome biogenesis protein RLP24 (RSL24D1).